The sequence spans 496 residues: Probable E3 ubiquitin-protein ligase XBOS32 (496 aa).

5 ANK repeats span residues G50–L79, R83–R112, N117–N147, G180–E209, and A223–A252. The RING-type zinc finger occupies C321 to R368.

The catalysed reaction is S-ubiquitinyl-[E2 ubiquitin-conjugating enzyme]-L-cysteine + [acceptor protein]-L-lysine = [E2 ubiquitin-conjugating enzyme]-L-cysteine + N(6)-ubiquitinyl-[acceptor protein]-L-lysine.. It functions in the pathway protein modification; protein ubiquitination. This Oryza sativa subsp. japonica (Rice) protein is Probable E3 ubiquitin-protein ligase XBOS32 (XBOS32).